A 255-amino-acid polypeptide reads, in one-letter code: Tritrans,polycis-undecaprenyl-diphosphate synthase (geranylgeranyl-diphosphate specific) (255 aa).

The active site involves Asp34. Asp34 contributes to the Mg(2+) binding site. Substrate-binding positions include 35-38, His51, and 79-81; these read GNRR and STE. Asn82 serves as the catalytic Proton acceptor. Substrate-binding positions include Phe83, Arg85, Arg204, and 210–212; that span reads RIS. Glu223 lines the Mg(2+) pocket.

It belongs to the UPP synthase family. Homodimer. The cofactor is Mg(2+).

It catalyses the reaction geranylgeranyl diphosphate + 7 isopentenyl diphosphate = tri-trans,hepta-cis-undecaprenyl diphosphate + 7 diphosphate. In terms of biological role, catalyzes the sequential condensation of isopentenyl diphosphate (IPP) with geranylgeranyl diphosphate (GGPP) to yield (2Z,6Z,10Z,14Z,18Z,22Z,26Z,30E,34E,38E)-undecaprenyl diphosphate (tritrans,heptacis-UPP). It is probably the precursor of glycosyl carrier lipids. The polypeptide is Tritrans,polycis-undecaprenyl-diphosphate synthase (geranylgeranyl-diphosphate specific) (Picrophilus torridus (strain ATCC 700027 / DSM 9790 / JCM 10055 / NBRC 100828 / KAW 2/3)).